Reading from the N-terminus, the 365-residue chain is MAGNVFGQMFRITTWGESHGRAVGVVVDGLPAGLPFSEADIQKELDRRRPGQSEVSTPRSEADSVEILSGIFEGKSTGTPISMLVWNSDARSSSYDAIKNTPRPGHADFTYIARYGIRDHRGGGRSSARETIGRVAGGALAKLLLSHYGIRIVGHVLELGGIRAKSLSFEEILENVERTPVRCADPEAAKKMLEKVSALRQEGDSAGGIVEVMVKGVPAGLGEPVFDRLDADLAKALMSIPAVKGFEIGAGFEAARMRGSEMNDSFLMEDGKVTCSSNNAGGILGGISSGLDIVCRVAVKPTPSISKLQQTVDLTTRENAEIAIKGRHDPTIPPRMVPVAEAMVALVFADHMLRSGFINPRTLLG.

Residues 41–51 (IQKELDRRRPG) are compositionally biased toward basic and acidic residues. Residues 41–62 (IQKELDRRRPGQSEVSTPRSEA) are disordered. Position 48 (Arg-48) interacts with NADP(+). Residues 125 to 127 (RSS), Gly-285, 300 to 304 (KPTPS), and Arg-327 contribute to the FMN site.

It belongs to the chorismate synthase family. FMNH2 is required as a cofactor.

The enzyme catalyses 5-O-(1-carboxyvinyl)-3-phosphoshikimate = chorismate + phosphate. The protein operates within metabolic intermediate biosynthesis; chorismate biosynthesis; chorismate from D-erythrose 4-phosphate and phosphoenolpyruvate: step 7/7. Functionally, catalyzes the anti-1,4-elimination of the C-3 phosphate and the C-6 proR hydrogen from 5-enolpyruvylshikimate-3-phosphate (EPSP) to yield chorismate, which is the branch point compound that serves as the starting substrate for the three terminal pathways of aromatic amino acid biosynthesis. This reaction introduces a second double bond into the aromatic ring system. This chain is Chorismate synthase, found in Methanosarcina mazei (strain ATCC BAA-159 / DSM 3647 / Goe1 / Go1 / JCM 11833 / OCM 88) (Methanosarcina frisia).